A 71-amino-acid polypeptide reads, in one-letter code: Protein translocase subunit SecE (71 aa).

The helical transmembrane segment at 43–63 (VAGAGILAVGAIGFIIYVLLT) threads the bilayer.

The protein belongs to the SecE/SEC61-gamma family. Component of the Sec protein translocase complex. Heterotrimer consisting of SecY (alpha), SecG (beta) and SecE (gamma) subunits. The heterotrimers can form oligomers, although 1 heterotrimer is thought to be able to translocate proteins. Interacts with the ribosome. May interact with SecDF, and other proteins may be involved.

It localises to the cell membrane. Essential subunit of the Sec protein translocation channel SecYEG. Clamps together the 2 halves of SecY. May contact the channel plug during translocation. This Methanosarcina acetivorans (strain ATCC 35395 / DSM 2834 / JCM 12185 / C2A) protein is Protein translocase subunit SecE.